The primary structure comprises 176 residues: MAIHGIFFGSDTGNTENIAKMIQKQLGKDVADVHDIAKSSKEDLEAYDILLLGIPTWYYGEAQCDWDDFFPTLEEIDFNGKLVALFGCGDQEDYAEYFCDALGTIRDIIEPRGATIDADWPTAGYHFQASKGLADDDHFVGLAIDEDRHPELTADRVEKWVKQISEELHLDEILNA.

The 162-residue stretch at 4 to 165 (HGIFFGSDTG…RVEKWVKQIS (162 aa)) folds into the Flavodoxin-like domain.

It belongs to the flavodoxin family. FMN is required as a cofactor.

In terms of biological role, low-potential electron donor to a number of redox enzymes. The sequence is that of Flavodoxin 1 (fldA) from Shigella flexneri.